Consider the following 479-residue polypeptide: Replication factor C large subunit (479 aa).

Residue 50–57 participates in ATP binding; sequence GPPGSGKT. A compositionally biased stretch (basic and acidic residues) spans 420–468; that stretch reads EKIRKERKEEEKVEVREEKPEEKVEEKREERETKKEKEKKEEKKAEKKG. The disordered stretch occupies residues 420-479; that stretch reads EKIRKERKEEEKVEVREEKPEEKVEEKREERETKKEKEKKEEKKAEKKGKQVTLFDFIKK.

This sequence belongs to the activator 1 small subunits family. RfcL subfamily. Heterohexamer composed of four small subunits (RfcS) and two large subunits (RfcL).

Functionally, part of the RFC clamp loader complex which loads the PCNA sliding clamp onto DNA. The complex possesses DNA-independent ATPase activity. The protein is Replication factor C large subunit (rfcL) of Pyrococcus abyssi (strain GE5 / Orsay).